Consider the following 270-residue polypeptide: uncharacterized protein (270 aa).

Positions 53, 55, 83, 116, 207, and 209 each coordinate a divalent metal cation.

Belongs to the metallophosphoesterase superfamily. It depends on a divalent metal cation as a cofactor.

This is an uncharacterized protein from Bacillus subtilis (strain 168).